A 92-amino-acid polypeptide reads, in one-letter code: Small ribosomal subunit protein uS19 (92 aa).

It belongs to the universal ribosomal protein uS19 family.

Protein S19 forms a complex with S13 that binds strongly to the 16S ribosomal RNA. This Hyphomonas neptunium (strain ATCC 15444) protein is Small ribosomal subunit protein uS19.